The chain runs to 290 residues: Membrane protein insertase YidC (290 aa).

The first 19 residues, 1–19 (MKKKALLPLFLGIMVFLAG), serve as a signal peptide directing secretion. The N-palmitoyl cysteine moiety is linked to residue cysteine 20. Cysteine 20 is lipidated: S-diacylglycerol cysteine. A run of 5 helical transmembrane segments spans residues 56 to 76 (YGLAIIILVLVIRIILLPFML), 134 to 154 (MLGCLPMLIQLPIIMGLYFVL), 176 to 196 (PDIWITIIAGVLYFIQAYVSS), 207 to 224 (GYMMMVISPIMIIWISLS), and 229 to 251 (LGLYWSVSAAFLVVQTHFANIYY). The segment at 270-290 (HNGGSNKKGKNTQVVSKKKKK) is disordered.

Belongs to the OXA1/ALB3/YidC family. Type 2 subfamily.

The protein localises to the cell membrane. Required for the insertion and/or proper folding and/or complex formation of integral membrane proteins into the membrane. Involved in integration of membrane proteins that insert both dependently and independently of the Sec translocase complex, as well as at least some lipoproteins. The protein is Membrane protein insertase YidC of Staphylococcus aureus (strain Mu3 / ATCC 700698).